The primary structure comprises 270 residues: Phosphatidylglycerol--prolipoprotein diacylglyceryl transferase (270 aa).

Helical transmembrane passes span 19–39 (FPVYWYGIIIGTGVLLGLWLA), 56–76 (LVLIAVPIAILFARMYYVIFE), 92–112 (QGGLAIHGGLIGAVITGVLFA), and 116–136 (GVSFWKLADIAAPSILLGQAI). R138 provides a ligand contact to a 1,2-diacyl-sn-glycero-3-phospho-(1'-sn-glycerol). Helical transmembrane passes span 178–198 (HPTFLYESLWNFAGVILLLAL), 206–226 (GELFFTYLIWYSVGRFFVEGL), and 236–256 (LRIAQVMSIGLVVISIIFIIV).

Belongs to the Lgt family.

The protein localises to the cell membrane. The catalysed reaction is L-cysteinyl-[prolipoprotein] + a 1,2-diacyl-sn-glycero-3-phospho-(1'-sn-glycerol) = an S-1,2-diacyl-sn-glyceryl-L-cysteinyl-[prolipoprotein] + sn-glycerol 1-phosphate + H(+). Its pathway is protein modification; lipoprotein biosynthesis (diacylglyceryl transfer). Its function is as follows. Catalyzes the transfer of the diacylglyceryl group from phosphatidylglycerol to the sulfhydryl group of the N-terminal cysteine of a prolipoprotein, the first step in the formation of mature lipoproteins. The sequence is that of Phosphatidylglycerol--prolipoprotein diacylglyceryl transferase from Bacillus cereus (strain B4264).